Here is a 168-residue protein sequence, read N- to C-terminus: Large ribosomal subunit protein uL29c (168 aa).

The interval 1-20 (MLAIHSLSSTPCSSGLTSPP) is disordered. The transit peptide at 1–58 (MLAIHSLSSTPCSSGLTSPPKSTLLTKSSFHGLRLPSVNLSSSLRLRVQTPPSSVVVM) directs the protein to the chloroplast.

As to quaternary structure, component of the chloroplast large ribosomal subunit (LSU). Mature 70S chloroplast ribosomes of higher plants consist of a small (30S) and a large (50S) subunit. The 30S small subunit contains 1 molecule of ribosomal RNA (16S rRNA) and 24 different proteins. The 50S large subunit contains 3 rRNA molecules (23S, 5S and 4.5S rRNA) and 33 different proteins.

The protein resides in the plastid. The protein localises to the chloroplast. Component of the chloroplast ribosome (chloro-ribosome), a dedicated translation machinery responsible for the synthesis of chloroplast genome-encoded proteins, including proteins of the transcription and translation machinery and components of the photosynthetic apparatus. The chain is Large ribosomal subunit protein uL29c (RPL29) from Spinacia oleracea (Spinach).